Reading from the N-terminus, the 314-residue chain is Coiled-coil domain-containing protein 42 like-2 (314 aa).

Coiled coils occupy residues 34–133 (RLLE…KGTL) and 175–231 (NKLL…FQWE).

Belongs to the CFAP73 family.

This is Coiled-coil domain-containing protein 42 like-2 from Xenopus tropicalis (Western clawed frog).